Reading from the N-terminus, the 1385-residue chain is MAILNELYPSVPYNVLAYTPPSFLPDAGTQATPADLTAYEQLLKNLEKGINAGTYSKAIADVLKGIFIDDTINYQTYVNIGLSLITLAVPEIGIFTPFIGLFFAALNKHDAPPPPNAKDIFEAMKPAIQEMIDRTLTADEQTFLNGEISGLQNLAARYQSTMDDIQSHGGFNKVDSGLIKKFTDEVLSLNSFYTDRLPVFITDNTADRTLLGLPYYAILASMHLMLLRDIITKGPTWDSKINFTPDAIDSFKTDIKNNIKLYSKTIYDVFQKGLASYGTPSDLESFAKKQKYIEIMTTHCLDFARLFPTFDPDLYPTGSGDISLQKTRRILSPFIPIRTADGLTLNNTSIDTSNWPNYENGNGAFPNPKERILKQFKLYPSWRAGQYGGLLQPYLWAIEVQDSVETRLYGQLPAVDPQAGPNYVSIDSSNPIIQINMDTWKTPPQGASGWNTNLMRGSVSGLSFLQRDGTRLSAGMGGGFADTIYSLPATHYLSYLYGTPYQTSDNYSGHVGALVGVSTPQEATLPNIIGQPDEQGNVSTMGFPFEKASYGGTVVKEWLNGANAMKLSPGQSIGIPITNVTSGEYQIRCRYASNDNTNVFFNVDTGGANPIFQQINFASTVDNNTGVQGANGVYVVKSIATTDNSFTEIPAKTINVHLTNQGSSDVFLDRIEFIPFSLPLIYHGSYNTSSGADDVLWSSSNMNYYDIIVNGQANSSSIASSMHLLNKGKVIKTIDIPGHSETFFATFPVPEGFNEVRILAGLPEVSGNITVQSNNPPQPSNNGGGDGGGNGGGDGGQYNFSLSGSDHTTIYHGKLETGIHVQGNYTYTGTPVLILNAYRNNTVVSSIPVYSPFDITIQTEADSLELELQPRYGFATVNGTATVKSPNVNYDRSFKLPIDLQNITTQVNALFASGTQNMLAHNVSDHDIEEVVLKVDALSDEVFGDEKKALRKLVNQAKRLSRARNLLIGGSFENWDAWYKGRNVVTVSDHELFKSDHVLLPPPGLSPSYIFQKVEESKLKPNTRYIVSGFIAHGKDLEIVVSRYGQEVQKVVQVPYGEAFPLTSNGPVCCPPRSTSNGTLGDPHFFSYSIDVGALDLQANPGIEFGLRIVNPTGMARVSNLEIREDRPLAANEIRQVQRVARNWRTEYEKERAEVTSLIQPVINRINGLYENGNWNGSIRSDISYQNIDAIVLPTLPKLRHWFMSDRFSEQGDIMAKFQGALNRAYAQLEQSTLLHNGHFTKDAANWTIEGDAHQITLEDGRRVLRLPDWSSSVSQMIEIENFNPDKEYNLVFHGQGEGTVTLEHGEETKYIETHTHHFANFTTSQRQGLTFESNKVTVTISSEDGEFLVDNIALVEAPLPTDDQNSEGNTASSTNSDTSMNNNQ.

2 disordered regions span residues 768–799 (NITVQSNNPPQPSNNGGGDGGGNGGGDGGQYN) and 1359–1385 (PLPTDDQNSEGNTASSTNSDTSMNNNQ). Over residues 782–796 (NGGGDGGGNGGGDGG) the composition is skewed to gly residues. The span at 1370–1385 (NTASSTNSDTSMNNNQ) shows a compositional bias: low complexity.

It belongs to the delta endotoxin family.

Functionally, endotoxin with nematicidal activity. This chain is Pesticidal crystal protein Cry5Aa (cry5Aa), found in Bacillus thuringiensis subsp. darmstadiensis.